The following is a 1009-amino-acid chain: MAAIKLLVLSLACACVIAHSPIPPASRTIFLDERLEGGAFENIDAFENIELSNVVASPYRLPTTTVPTHYKILWIIDIHQPVQTYSGNVVITLHATQAQVNEIVIHSDHMTLSSVVLRQGDTVIPTTPTAQPEYHFLRVKLNDGYLAYNADNAVLYTLSIDFTAPMRDDMYGIYNSWYRNLPDDANVRWMATTQFQATAARYAFPCYDEPGFKAKFDVTIRRPVGYSSWFCTRQKGSGPSTVAGYEEDEYHTTPTMSTYLLALIVSEYTSLPATNAAGEILHEVIARPGAINNGQAVYAQRVGQALLAEMSDHTGFDFYAQDPNLKMTQAAIPDFGAGAMENWGLLTYREAYLLYDEQHTNSYFKQIIAYILSHEIAHMWFGNLVTNAWWDVLWLNEGFARYYQYFLTAWVEDLGLATRFINEQVHASLLSDSSIYAHPLTNPGVGSPAAVSAMFSTVTYNKGASIIRMTEHLLGFDVHRTGLRNYLKDLAYKTAQPIDLFTALESAGNQAGALSAYGSDFDFVKYYESWTEQPGHPVLNVQINHQTGQMTITQRRFDIDTGHSVQNRNYIIPITFTTGANPSFDNTKPSHIISKGVTVIDRGVVGDYWTIFNIQQTGFYRVNYDDYTWNLIVLALRGADREKIHEYNRAQIVNDVFQFARSGLMTYQRALNILSFLEFETEYAPWVAAITGFNWLRNRLVGKPQLDELNEKIVQWSSKVMGELTYMPTEGEPFMRSYLRWQLAPVMCNLNVPACRAGARAIFEDLRVFGHEVPVDSRNWVYCNALRDGGAQEFNFLYNRFKSHNVYTEKIVLLQTLGCTSHVESLNTLLTDIVTPNQMIRPQDYTTAFNTAVSGNEVNTRLVWNYIQANLQLVFNAFASPRTPLSYIAARLRTVEEVVEYQTWLNTTAIQSALGTNYNAIYGDSVATYNSILWVSTIEDSLSTYLTNGNDVIEPSTSTTSTTAAPTTVTQPTITEPSTPTLPELTDSAMTSFASLFIISLGAILHLIL.

Positions 1–15 (MAAIKLLVLSLACAC) are cleaved as a signal peptide. Residues 16-52 (VIAHSPIPPASRTIFLDERLEGGAFENIDAFENIELS) constitute a propeptide, activation peptide. Substrate is bound at residue 338-342 (GAMEN). His374 lines the Zn(2+) pocket. The active-site Proton acceptor is Glu375. Zn(2+) contacts are provided by His378 and Glu397. Residue Asn906 is glycosylated (N-linked (GlcNAc...) asparagine). Residues 955–980 (PSTSTTSTTAAPTTVTQPTITEPSTP) form a disordered region. Asp987 carries GPI-anchor amidated aspartate lipidation. A propeptide spans 988 to 1009 (SAMTSFASLFIISLGAILHLIL) (removed in mature form).

This sequence belongs to the peptidase M1 family. Zn(2+) is required as a cofactor.

It localises to the cell membrane. Its function is as follows. Binds to the B.thuringiensis toxin, CryIA(C). The sequence is that of Membrane alanyl aminopeptidase from Heliothis virescens (Tobacco budworm moth).